A 150-amino-acid polypeptide reads, in one-letter code: Large ribosomal subunit protein bL9 (150 aa).

It belongs to the bacterial ribosomal protein bL9 family.

Functionally, binds to the 23S rRNA. The chain is Large ribosomal subunit protein bL9 from Lactococcus lactis subsp. cremoris (strain MG1363).